The sequence spans 438 residues: MRRFRVWPPSPSPWPLLASRPCPHSHHHRSPFHASANSGARQGNFILPGATAATLVMFGILHARRMYEDQKVVERKEKGIEPEFSPDFKASFLRLLPLRSMSRLWGSLMEVELPVFMRPAIYKAWARAFHSNLQEAAMPLEEYPSLQAFFIRSLKEGSRPIDADPNCLVSPVDGKVLRLGELRGPGTMIEQVKGFSYSAASLLGASSSLHGAEEEDFSREHTEQSNPADSNAKSWWRVSVAKPKLWDQTLLSPKKGIFYCVIYLHPGDYHRVHSPVDWNIIKRRHFSGHLFPQNERAVRTIRNLYVENERVVLEGQWKEGFVAIAAIGATNVGSIKLYIEPELRTNRAGSKILNSQPEPPDDRVYEPVGTGVMVKKGEEIAGFKMGSTVVMVFEAPVVSKARWREDGSGTVTSDFDFCIKAGDRIRVGEAIGRWTSRE.

The N-terminal 21 residues, 1–21 (MRRFRVWPPSPSPWPLLASRP), are a transit peptide targeting the mitochondrion. Over 22 to 48 (CPHSHHHRSPFHASANSGARQGNFILP) the chain is Mitochondrial matrix. A helical membrane pass occupies residues 49 to 67 (GATAATLVMFGILHARRMY). Residues 68–438 (EDQKVVERKE…EAIGRWTSRE (371 aa)) lie on the Mitochondrial intermembrane side of the membrane. Active-site charge relay system; for autoendoproteolytic cleavage activity residues include D173, H273, and S387. The active-site Schiff-base intermediate with substrate; via pyruvic acid; for decarboxylase activity is S387. S387 bears the Pyruvic acid (Ser); by autocatalysis mark.

This sequence belongs to the phosphatidylserine decarboxylase family. PSD-B subfamily. Eukaryotic type I sub-subfamily. In terms of assembly, heterodimer of a large membrane-associated beta subunit and a small pyruvoyl-containing alpha subunit. Pyruvate is required as a cofactor. In terms of processing, is synthesized initially as an inactive proenzyme. Formation of the active enzyme involves a self-maturation process in which the active site pyruvoyl group is generated from an internal serine residue via an autocatalytic post-translational modification. Two non-identical subunits are generated from the proenzyme in this reaction, and the pyruvate is formed at the N-terminus of the alpha chain, which is derived from the carboxyl end of the proenzyme. The autoendoproteolytic cleavage occurs by a canonical serine protease mechanism, in which the side chain hydroxyl group of the serine supplies its oxygen atom to form the C-terminus of the beta chain, while the remainder of the serine residue undergoes an oxidative deamination to produce ammonia and the pyruvoyl prosthetic group on the alpha chain. During this reaction, the Ser that is part of the protease active site of the proenzyme becomes the pyruvoyl prosthetic group, which constitutes an essential element of the active site of the mature decarboxylase.

The protein resides in the mitochondrion inner membrane. The catalysed reaction is a 1,2-diacyl-sn-glycero-3-phospho-L-serine + H(+) = a 1,2-diacyl-sn-glycero-3-phosphoethanolamine + CO2. It participates in phospholipid metabolism; phosphatidylethanolamine biosynthesis; phosphatidylethanolamine from CDP-diacylglycerol: step 2/2. In terms of biological role, catalyzes the formation of phosphatidylethanolamine (PtdEtn) from phosphatidylserine (PtdSer). Plays a central role in phospholipid metabolism and in the interorganelle trafficking of phosphatidylserine. In Oryza sativa subsp. japonica (Rice), this protein is Phosphatidylserine decarboxylase proenzyme 1, mitochondrial (PSD1).